We begin with the raw amino-acid sequence, 150 residues long: Macrodomain Ter protein (150 aa).

It belongs to the MatP family. As to quaternary structure, homodimer.

It localises to the cytoplasm. Required for spatial organization of the terminus region of the chromosome (Ter macrodomain) during the cell cycle. Prevents early segregation of duplicated Ter macrodomains during cell division. Binds specifically to matS, which is a 13 bp signature motif repeated within the Ter macrodomain. The chain is Macrodomain Ter protein from Salmonella typhi.